Reading from the N-terminus, the 903-residue chain is Protein translocase subunit SecA (903 aa).

Residues Gln89, 107-111 (GEGKT), and Asp502 each bind ATP. 4 residues coordinate Zn(2+): Cys886, Cys888, Cys897, and His898.

It belongs to the SecA family. Monomer and homodimer. Part of the essential Sec protein translocation apparatus which comprises SecA, SecYEG and auxiliary proteins SecDF-YajC and YidC. It depends on Zn(2+) as a cofactor.

Its subcellular location is the cell inner membrane. The protein resides in the cytoplasm. It catalyses the reaction ATP + H2O + cellular proteinSide 1 = ADP + phosphate + cellular proteinSide 2.. In terms of biological role, part of the Sec protein translocase complex. Interacts with the SecYEG preprotein conducting channel. Has a central role in coupling the hydrolysis of ATP to the transfer of proteins into and across the cell membrane, serving both as a receptor for the preprotein-SecB complex and as an ATP-driven molecular motor driving the stepwise translocation of polypeptide chains across the membrane. This Sinorhizobium medicae (strain WSM419) (Ensifer medicae) protein is Protein translocase subunit SecA.